Consider the following 1966-residue polypeptide: Alpha-protein kinase 2 (1966 aa).

Disordered regions lie at residues 23–65, 211–231, 1211–1259, 1303–1365, 1386–1423, and 1437–1463; these read NSSP…STGL, AMNS…DTDK, LKSN…AYSD, SLPN…EGAG, KTQG…VNGK, and NKPV…SVRP. Residues 211–227 are compositionally biased toward polar residues; it reads AMNSEQSPDQPFSIASN. Positions 1211-1221 are enriched in low complexity; that stretch reads LKSNKKSSSSD. The segment covering 1325–1342 has biased composition (basic and acidic residues); the sequence is SDGKMRSKHKEKPDDKQQ. Residues 1388 to 1397 are compositionally biased toward basic residues; it reads QGKKKKKHVQ. Residues 1401 to 1417 show a composition bias toward basic and acidic residues; that stretch reads PKPENDAPTDVRSESRQ. Residues 1577-1659 form the Ig-like domain; sequence PRVVSEIQAD…SLIVANISVS (83 aa). A disulfide bridge links Cys-1599 with Cys-1649. An Alpha-type protein kinase domain is found at 1702 to 1934; it reads KEDFLSDQYF…YCELLGLVSL (233 aa). A disordered region spans residues 1937–1966; that stretch reads KPKRTVAPPKPKTQPVPKKKTFGPVLNAKS.

Belongs to the protein kinase superfamily. Alpha-type protein kinase family. ALPK subfamily. In terms of tissue distribution, expressed in developing cardiac tissue.

The protein localises to the basolateral cell membrane. It carries out the reaction L-seryl-[protein] + ATP = O-phospho-L-seryl-[protein] + ADP + H(+). The catalysed reaction is L-threonyl-[protein] + ATP = O-phospho-L-threonyl-[protein] + ADP + H(+). Functionally, protein kinase that recognizes phosphorylation sites in which the surrounding peptides have an alpha-helical conformation. Regulates cardiac development and cardiomyocyte differentiation by negatively regulating Wnt/beta-catenin signaling. In Danio rerio (Zebrafish), this protein is Alpha-protein kinase 2 (alpk2).